A 224-amino-acid chain; its full sequence is Ribonuclease HII (224 aa).

The RNase H type-2 domain maps to 1 to 210; sequence MKLGGIDEAG…LKKIEEKLQK (210 aa). Residues Asp-7, Glu-8, and Asp-105 each contribute to the a divalent metal cation site.

This sequence belongs to the RNase HII family. It depends on Mn(2+) as a cofactor. The cofactor is Mg(2+).

The protein localises to the cytoplasm. The enzyme catalyses Endonucleolytic cleavage to 5'-phosphomonoester.. Its function is as follows. Endonuclease that specifically degrades the RNA of RNA-DNA hybrids. This Thermococcus sibiricus (strain DSM 12597 / MM 739) protein is Ribonuclease HII.